A 316-amino-acid polypeptide reads, in one-letter code: SWR complex protein 2 (316 aa).

Disordered regions lie at residues 1–81, 93–127, and 153–180; these read MSAT…GEEV, KRKIQKNRAANLQRTLQPPKRPTPSAASEVPKKKY, and ETRLQEAKPRRKYTVSASANRQKGTMTQ. Positions 20 to 31 are enriched in basic and acidic residues; that stretch reads KMRELLEKEHLR. Residues 20–95 adopt a coiled-coil conformation; the sequence is KMRELLEKEH…RDEERIKKRK (76 aa). Acidic residues predominate over residues 40 to 56; it reads EKEDEEYNIEEEEEAER. Phosphoserine occurs at positions 64 and 65. Over residues 70–81 the composition is skewed to basic and acidic residues; the sequence is ELKKLEEEGEEV. Over residues 167–180 the composition is skewed to polar residues; sequence VSASANRQKGTMTQ.

Belongs to the VPS72/YL1 family. As to quaternary structure, component of the SWR1 chromatin-remodeling complex.

The protein resides in the nucleus. Its function is as follows. Participates in the catalytic exchange of histone H2A for the H2A variant pht1, an euchromatin-specific factor, leading to chromatin remodeling and changes in transcription of targeted genes. In Schizosaccharomyces pombe (strain 972 / ATCC 24843) (Fission yeast), this protein is SWR complex protein 2 (swc2).